Reading from the N-terminus, the 118-residue chain is MNGSSNSGSPGGGQTGDDDGTGFDLATETRIKTKKPSLYRVLLLNDDYTPMEFVVFILERFFNRSREQATRIMLHVHQKGVGLCGVYTYEVAETKVAQVLDLARRHEHPLQCVMEKED.

A disordered region spans residues 1-24 (MNGSSNSGSPGGGQTGDDDGTGFD).

This sequence belongs to the ClpS family. Binds to the N-terminal domain of the chaperone ClpA.

Its function is as follows. Involved in the modulation of the specificity of the ClpAP-mediated ATP-dependent protein degradation. The polypeptide is ATP-dependent Clp protease adapter protein ClpS (Hyphomonas neptunium (strain ATCC 15444)).